A 269-amino-acid polypeptide reads, in one-letter code: 3-methyl-2-oxobutanoate hydroxymethyltransferase (269 aa).

Mg(2+) is bound by residues Asp49 and Asp88. 3-methyl-2-oxobutanoate contacts are provided by residues 49–50 (DS), Asp88, and Lys118. Residue Glu120 coordinates Mg(2+). The Proton acceptor role is filled by Glu186.

It belongs to the PanB family. In terms of assembly, homodecamer; pentamer of dimers. The cofactor is Mg(2+).

The protein resides in the cytoplasm. It carries out the reaction 3-methyl-2-oxobutanoate + (6R)-5,10-methylene-5,6,7,8-tetrahydrofolate + H2O = 2-dehydropantoate + (6S)-5,6,7,8-tetrahydrofolate. It participates in cofactor biosynthesis; (R)-pantothenate biosynthesis; (R)-pantoate from 3-methyl-2-oxobutanoate: step 1/2. Functionally, catalyzes the reversible reaction in which hydroxymethyl group from 5,10-methylenetetrahydrofolate is transferred onto alpha-ketoisovalerate to form ketopantoate. In Pelobacter propionicus (strain DSM 2379 / NBRC 103807 / OttBd1), this protein is 3-methyl-2-oxobutanoate hydroxymethyltransferase.